A 416-amino-acid polypeptide reads, in one-letter code: Peptide chain release factor subunit 1 (416 aa).

It belongs to the eukaryotic release factor 1 family. Heterodimer of two subunits, one of which binds GTP.

The protein resides in the cytoplasm. Its function is as follows. Directs the termination of nascent peptide synthesis (translation) in response to the termination codons UAA, UAG and UGA. The sequence is that of Peptide chain release factor subunit 1 from Halobacterium salinarum (strain ATCC 29341 / DSM 671 / R1).